A 168-amino-acid chain; its full sequence is Phosphopantetheine adenylyltransferase (168 aa).

Substrate is bound at residue T9. Residues 9–10 and H17 contribute to the ATP site; that span reads TF. Substrate is bound by residues K41, L73, and R87. ATP contacts are provided by residues 88 to 90, E98, and 123 to 129; these read GLR and YQFISGT.

It belongs to the bacterial CoaD family. Homohexamer. Mg(2+) is required as a cofactor.

The protein resides in the cytoplasm. The catalysed reaction is (R)-4'-phosphopantetheine + ATP + H(+) = 3'-dephospho-CoA + diphosphate. It functions in the pathway cofactor biosynthesis; coenzyme A biosynthesis; CoA from (R)-pantothenate: step 4/5. In terms of biological role, reversibly transfers an adenylyl group from ATP to 4'-phosphopantetheine, yielding dephospho-CoA (dPCoA) and pyrophosphate. The sequence is that of Phosphopantetheine adenylyltransferase from Ralstonia nicotianae (strain ATCC BAA-1114 / GMI1000) (Ralstonia solanacearum).